The following is an 86-amino-acid chain: BolA-like protein 2 (86 aa).

M1 bears the N-acetylmethionine mark.

The protein belongs to the BolA/IbaG family. As to quaternary structure, interacts with GLRX3; forms a heterotrimeric complex composed by two BOLA2 molecules and one GLRX3 molecule; linked by [2Fe-2S] clusters.

Its subcellular location is the cytoplasm. The protein resides in the nucleus. Functionally, acts as a cytosolic iron-sulfur (Fe-S) cluster assembly factor that facilitates [2Fe-2S] cluster insertion into a subset of cytosolic proteins. Acts together with the monothiol glutaredoxin GLRX3. This is BolA-like protein 2 (Bola2) from Mus musculus (Mouse).